Consider the following 325-residue polypeptide: Interleukin-10 receptor subunit beta (325 aa).

The N-terminal stretch at 1-19 (MAWSLGSWLGGCLLVSALG) is a signal peptide. Topologically, residues 20 to 220 (MVPPPENVRM…QTTHDETVPS (201 aa)) are extracellular. 2 consecutive Fibronectin type-III domains span residues 23-111 (PPEN…VDDT) and 114-216 (GPPG…THDE). N-linked (GlcNAc...) asparagine glycans are attached at residues Asn49, Asn68, Asn102, and Asn161. A disulfide bond links Cys66 and Cys74. Cys188 and Cys209 are oxidised to a cystine. The helical transmembrane segment at 221-242 (WMVAVILMASVFMVCLALLGCF) threads the bilayer. Residues 243–325 (ALLWCVYKKT…GTPPGQGPQS (83 aa)) lie on the Cytoplasmic side of the membrane. Residues 301-325 (DSESGKQNPGDSCSLGTPPGQGPQS) are disordered. Over residues 305–315 (GKQNPGDSCSL) the composition is skewed to polar residues.

Belongs to the type II cytokine receptor family. As to quaternary structure, heterodimer with IFNLR1.

Its subcellular location is the membrane. Shared cell surface receptor required for the activation of five class 2 cytokines: IL10, IL22, IL26, IL28, and IFNL1. The IFNLR1/IL10RB dimer is a receptor for the cytokine ligands IFNL2 and IFNL3 and mediates their antiviral activity. The ligand/receptor complex stimulate the activation of the JAK/STAT signaling pathway leading to the expression of IFN-stimulated genes (ISG), which contribute to the antiviral state. The polypeptide is Interleukin-10 receptor subunit beta (IL10RB) (Homo sapiens (Human)).